The primary structure comprises 161 residues: MVAALFGCQPYLVQRLLAVDNDFAAILKGNGQYAAVDFAVDIAVAIPVVQAFFNGQPELISQAMKFTVVHCCILFLSDGGSIAAWGQGFKVCTSAAAFRHDSSVTGIMMSLCSERFVSSLGRSYTTSFPVSGKHYDQVYRASILTLTELKKTTNKPHCDSA.

This Escherichia coli (strain K12) protein is Protein YzcX (yzcX).